The primary structure comprises 178 residues: Small ribosomal subunit protein uS4 (178 aa).

Residues 104–166 enclose the S4 RNA-binding domain; sequence RRLQTIVYRK…PNSPMASENH (63 aa). The interval 158–178 is disordered; it reads NSPMASENHPERTAAVSEENQ.

This sequence belongs to the universal ribosomal protein uS4 family. In terms of assembly, part of the 30S ribosomal subunit. Contacts protein S5. The interaction surface between S4 and S5 is involved in control of translational fidelity.

In terms of biological role, one of the primary rRNA binding proteins, it binds directly to 16S rRNA where it nucleates assembly of the body of the 30S subunit. Functionally, with S5 and S12 plays an important role in translational accuracy. The protein is Small ribosomal subunit protein uS4 of Methanococcus maripaludis (strain C6 / ATCC BAA-1332).